The chain runs to 239 residues: Peptidyl-tRNA hydrolase (239 aa).

Residue Y14 coordinates tRNA. H19 acts as the Proton acceptor in catalysis. TRNA is bound by residues F64, N66, and N112. The interval 188–239 (APPRSSTSKPKAQDNREDAAQAAEERSETRTPPEARPEDTRSALQKLADKFR) is disordered. Basic and acidic residues predominate over residues 198–239 (KAQDNREDAAQAAEERSETRTPPEARPEDTRSALQKLADKFR).

This sequence belongs to the PTH family. In terms of assembly, monomer.

It is found in the cytoplasm. It carries out the reaction an N-acyl-L-alpha-aminoacyl-tRNA + H2O = an N-acyl-L-amino acid + a tRNA + H(+). In terms of biological role, hydrolyzes ribosome-free peptidyl-tRNAs (with 1 or more amino acids incorporated), which drop off the ribosome during protein synthesis, or as a result of ribosome stalling. Functionally, catalyzes the release of premature peptidyl moieties from peptidyl-tRNA molecules trapped in stalled 50S ribosomal subunits, and thus maintains levels of free tRNAs and 50S ribosomes. In Jannaschia sp. (strain CCS1), this protein is Peptidyl-tRNA hydrolase.